Reading from the N-terminus, the 495-residue chain is Aspartyl/glutamyl-tRNA(Asn/Gln) amidotransferase subunit B (495 aa).

It belongs to the GatB/GatE family. GatB subfamily. As to quaternary structure, heterotrimer of A, B and C subunits.

It catalyses the reaction L-glutamyl-tRNA(Gln) + L-glutamine + ATP + H2O = L-glutaminyl-tRNA(Gln) + L-glutamate + ADP + phosphate + H(+). The enzyme catalyses L-aspartyl-tRNA(Asn) + L-glutamine + ATP + H2O = L-asparaginyl-tRNA(Asn) + L-glutamate + ADP + phosphate + 2 H(+). In terms of biological role, allows the formation of correctly charged Asn-tRNA(Asn) or Gln-tRNA(Gln) through the transamidation of misacylated Asp-tRNA(Asn) or Glu-tRNA(Gln) in organisms which lack either or both of asparaginyl-tRNA or glutaminyl-tRNA synthetases. The reaction takes place in the presence of glutamine and ATP through an activated phospho-Asp-tRNA(Asn) or phospho-Glu-tRNA(Gln). The chain is Aspartyl/glutamyl-tRNA(Asn/Gln) amidotransferase subunit B from Methanosarcina barkeri (strain Fusaro / DSM 804).